A 111-amino-acid polypeptide reads, in one-letter code: Probable 4-amino-4-deoxy-L-arabinose-phosphoundecaprenol flippase subunit ArnE (111 aa).

Transmembrane regions (helical) follow at residues 38 to 58 (LWLGLALICMGAAMVLWLLVL), 61 to 81 (LPVGIAYPMLSLNFVWVTLAA), and 91 to 111 (PRHWLGVALIISGIIILGSAA). In terms of domain architecture, EamA spans 40–109 (LGLALICMGA…IISGIIILGS (70 aa)).

Belongs to the ArnE family. Heterodimer of ArnE and ArnF.

It is found in the cell inner membrane. Its pathway is bacterial outer membrane biogenesis; lipopolysaccharide biosynthesis. Translocates 4-amino-4-deoxy-L-arabinose-phosphoundecaprenol (alpha-L-Ara4N-phosphoundecaprenol) from the cytoplasmic to the periplasmic side of the inner membrane. This chain is Probable 4-amino-4-deoxy-L-arabinose-phosphoundecaprenol flippase subunit ArnE, found in Salmonella choleraesuis (strain SC-B67).